Reading from the N-terminus, the 409-residue chain is Pentatricopeptide repeat-containing protein At5g09450, mitochondrial (409 aa).

The N-terminal 38 residues, 1–38 (MATRSLFHSLRCRLTNNGVLGSNFIRNAESSRFSKSYN), are a transit peptide targeting the mitochondrion. 6 PPR repeats span residues 155–189 (TAET…DSLT), 191–225 (GAIT…KVSP), 226–256 (DIFT…MRHD), 262–296 (GWVR…SISQ), 298–332 (EWIT…NQIL), and 333–367 (SSRS…KTTE).

The protein belongs to the PPR family. P subfamily.

It is found in the mitochondrion. The protein is Pentatricopeptide repeat-containing protein At5g09450, mitochondrial of Arabidopsis thaliana (Mouse-ear cress).